Here is a 359-residue protein sequence, read N- to C-terminus: Fructose-bisphosphate aldolase, cytoplasmic isozyme 2 (359 aa).

The substrate site is built by R52 and K143. Catalysis depends on E184, which acts as the Proton acceptor. The Schiff-base intermediate with dihydroxyacetone-P role is filled by K226.

Belongs to the class I fructose-bisphosphate aldolase family.

Its subcellular location is the cytoplasm. It catalyses the reaction beta-D-fructose 1,6-bisphosphate = D-glyceraldehyde 3-phosphate + dihydroxyacetone phosphate. The protein operates within carbohydrate degradation; glycolysis; D-glyceraldehyde 3-phosphate and glycerone phosphate from D-glucose: step 4/4. The sequence is that of Fructose-bisphosphate aldolase, cytoplasmic isozyme 2 from Pisum sativum (Garden pea).